We begin with the raw amino-acid sequence, 1076 residues long: Probable cellulose synthase A catalytic subunit 1 [UDP-forming] (1076 aa).

At 1 to 267 the chain is on the cytoplasmic side; sequence MAANAGMVAG…SRIVPIPSNQ (267 aa). Cys-41, Cys-44, Cys-60, Cys-63, Cys-68, Cys-71, Cys-83, and Cys-86 together coordinate Zn(2+). Residues 41 to 87 form an RING-type; degenerate zinc finger; sequence CQICGDTVGVSATGDVFVACNECAFPVCRPCYEYERKEGNQCCPQCK. The interval 119 to 179 is disordered; sequence HGNGKGPEWQ…HSIRSGTSSY (61 aa). The chain crosses the membrane as a helical span at residues 268–288; it reads LNLYRIVIILRLIILMFFFQY. Topologically, residues 289 to 296 are extracellular; it reads RVTHPVRD. A helical transmembrane segment spans residues 297–317; sequence AYGLWLVSVICEIWFALSWLL. Topologically, residues 318–851 are cytoplasmic; it reads DQFPKWYPIN…LLERLAYINT (534 aa). UDP-alpha-D-glucose contacts are provided by Ser-356, Lys-362, Glu-363, and Asp-392. Residue Asp-392 is part of the active site. The stretch at 446–473 forms a coiled coil; the sequence is VKERRAMKREYEEFKVRINALVAKAQKV. Lys-533 is a binding site for UDP-alpha-D-glucose. Mn(2+) is bound by residues Lys-534 and Asp-558. Asp-775 is a catalytic residue. Residues 852–872 traverse the membrane as a helical segment; the sequence is IVYPITSIPLIAYCVLPAICL. Topologically, residues 873 to 884 are extracellular; the sequence is LTNKFIIPEISN. A helical transmembrane segment spans residues 885-905; that stretch reads YAGMFFILLFASIFATGILEL. Residues 906-920 are Cytoplasmic-facing; that stretch reads RWSGVGIEDWWRNEQ. A helical membrane pass occupies residues 921–941; it reads FWVIGGTSAHLFAVFQGLLKV. Residues 942 to 971 lie on the Extracellular side of the membrane; sequence LAGIDTNFTVTSKASDEDGDFAELYVFKWT. The N-linked (GlcNAc...) asparagine glycan is linked to Asn-948. A helical transmembrane segment spans residues 972-992; sequence SLLIPPTTVLVINLVGMVAGI. The Cytoplasmic segment spans residues 993–1003; it reads SYAINSGYQSW. The helical transmembrane segment at 1004 to 1024 threads the bilayer; sequence GPLFGKLFFSIWVILHLYPFL. The Extracellular segment spans residues 1025–1033; the sequence is KGLMGRQNR. Residues 1034 to 1054 form a helical membrane-spanning segment; the sequence is TPTIVIVWSILLASIFSLLWV. Residues 1055–1076 lie on the Cytoplasmic side of the membrane; the sequence is KIDPFISPTQKAVALGQCGVNC.

This sequence belongs to the glycosyltransferase 2 family. Plant cellulose synthase subfamily. Requires Zn(2+) as cofactor. Mn(2+) is required as a cofactor.

It localises to the cell membrane. The catalysed reaction is [(1-&gt;4)-beta-D-glucosyl](n) + UDP-alpha-D-glucose = [(1-&gt;4)-beta-D-glucosyl](n+1) + UDP + H(+). It participates in glycan metabolism; plant cellulose biosynthesis. Its function is as follows. Catalytic subunit of cellulose synthase terminal complexes ('rosettes'), required for beta-1,4-glucan microfibril crystallization, a major mechanism of the cell wall formation. The chain is Probable cellulose synthase A catalytic subunit 1 [UDP-forming] (CESA1) from Oryza sativa subsp. indica (Rice).